The sequence spans 204 residues: Urease accessory protein UreG (204 aa).

11–18 is a GTP binding site; the sequence is GPVGAGKT.

This sequence belongs to the SIMIBI class G3E GTPase family. UreG subfamily. As to quaternary structure, homodimer. UreD, UreF and UreG form a complex that acts as a GTP-hydrolysis-dependent molecular chaperone, activating the urease apoprotein by helping to assemble the nickel containing metallocenter of UreC. The UreE protein probably delivers the nickel.

The protein localises to the cytoplasm. Functionally, facilitates the functional incorporation of the urease nickel metallocenter. This process requires GTP hydrolysis, probably effectuated by UreG. This chain is Urease accessory protein UreG, found in Staphylococcus aureus (strain bovine RF122 / ET3-1).